A 376-amino-acid chain; its full sequence is 23S rRNA (uracil(747)-C(5))-methyltransferase RlmC (376 aa).

C3, C11, C14, and C87 together coordinate [4Fe-4S] cluster. Q212, F241, E262, and N307 together coordinate S-adenosyl-L-methionine. The active-site Nucleophile is the C334.

This sequence belongs to the class I-like SAM-binding methyltransferase superfamily. RNA M5U methyltransferase family. RlmC subfamily.

It catalyses the reaction uridine(747) in 23S rRNA + S-adenosyl-L-methionine = 5-methyluridine(747) in 23S rRNA + S-adenosyl-L-homocysteine + H(+). Its function is as follows. Catalyzes the formation of 5-methyl-uridine at position 747 (m5U747) in 23S rRNA. This Citrobacter koseri (strain ATCC BAA-895 / CDC 4225-83 / SGSC4696) protein is 23S rRNA (uracil(747)-C(5))-methyltransferase RlmC.